The chain runs to 1081 residues: uncharacterized protein (1081 aa).

Coiled-coil stretches lie at residues 18–131 (AIEE…FEEN) and 173–242 (NHDE…NDDK). The span at 22–53 (NNKNREIQEKRQKETKDRNDRMVQNQKDRKEM) shows a compositional bias: basic and acidic residues. The tract at residues 22–60 (NNKNREIQEKRQKETKDRNDRMVQNQKDRKEMIGLTNEK) is disordered. 2 disordered regions span residues 250 to 321 (TDDE…KPGI) and 388 to 1081 (QEPK…GNDE). Over residues 267 to 283 (TPTPTPTPTPTPTPTPT) the composition is skewed to pro residues. Composition is skewed to low complexity over residues 284-313 (PTTT…KTST) and 396-410 (NNQS…QAGD). Positions 411–421 (DQNKNQNRDEN) are enriched in basic and acidic residues. Composition is skewed to low complexity over residues 422–568 (NQGG…NNQE), 576–602 (NQDG…GGEN), 614–623 (GENNQDGGEN), 633–644 (DGENNQDGGENN), 662–672 (GENNQDGGENN), and 680–733 (QDGG…NNQD). 3 stretches are compositionally biased toward acidic residues: residues 748 to 768 (GGED…DNQD), 778 to 832 (NNQD…DENN), and 840 to 854 (QDGD…DENN). Composition is skewed to low complexity over residues 855–869 (NQDG…GENN) and 877–888 (NQDGGENNQDGE). Over residues 889–954 (NNQDGDENNN…GDENNQDGDE (66 aa)) the composition is skewed to acidic residues. Composition is skewed to low complexity over residues 955 to 975 (NNQG…GGDE), 983 to 1026 (ENNQ…GGDE), and 1034 to 1081 (GENN…GNDE).

This is an uncharacterized protein from Dictyostelium discoideum (Social amoeba).